The following is a 321-amino-acid chain: Arabinan endo-1,5-alpha-L-arabinosidase A (321 aa).

Positions 1 to 19 (MYQLLSVASVPLLASLVHG) are cleaved as a signal peptide. Asp-34 acts as the Proton acceptor in catalysis. Catalysis depends on Glu-200, which acts as the Proton donor. Asn-295 carries N-linked (GlcNAc...) asparagine glycosylation.

The protein belongs to the glycosyl hydrolase 43 family.

The catalysed reaction is Endohydrolysis of (1-&gt;5)-alpha-arabinofuranosidic linkages in (1-&gt;5)-arabinans.. The protein operates within glycan metabolism; L-arabinan degradation. In terms of biological role, its preferred substrate is linear 1,5-alpha-L-arabinan. The enzyme activity is progressively reduced as 1,5-alpha-chains become shorter or more highly substituted. In Aspergillus niger, this protein is Arabinan endo-1,5-alpha-L-arabinosidase A (abnA).